Reading from the N-terminus, the 292-residue chain is uncharacterized protein (292 aa).

Belongs to the glycosyltransferase 2 family. WaaE/KdtX subfamily.

This is an uncharacterized protein from Rickettsia typhi (strain ATCC VR-144 / Wilmington).